Consider the following 72-residue polypeptide: SRY-related protein MG42 (72 aa).

A DNA-binding region (HMG box) is located at residues 1–69; that stretch reads VKRPMNAFMV…KHMADYPNYK (69 aa).

The protein resides in the nucleus. The sequence is that of SRY-related protein MG42 from Tarentola mauritanica (Common wall gecko).